The primary structure comprises 355 residues: Phenylalanine--tRNA ligase alpha subunit (355 aa).

Position 273 (Glu-273) interacts with Mg(2+).

It belongs to the class-II aminoacyl-tRNA synthetase family. Phe-tRNA synthetase alpha subunit type 1 subfamily. In terms of assembly, tetramer of two alpha and two beta subunits. Requires Mg(2+) as cofactor.

It localises to the cytoplasm. The catalysed reaction is tRNA(Phe) + L-phenylalanine + ATP = L-phenylalanyl-tRNA(Phe) + AMP + diphosphate + H(+). The chain is Phenylalanine--tRNA ligase alpha subunit from Bifidobacterium longum subsp. infantis (strain ATCC 15697 / DSM 20088 / JCM 1222 / NCTC 11817 / S12).